The primary structure comprises 311 residues: Urease accessory protein UreD 2 (311 aa).

This sequence belongs to the UreD family. In terms of assembly, ureD, UreF and UreG form a complex that acts as a GTP-hydrolysis-dependent molecular chaperone, activating the urease apoprotein by helping to assemble the nickel containing metallocenter of UreC. The UreE protein probably delivers the nickel.

It localises to the cytoplasm. In terms of biological role, required for maturation of urease via the functional incorporation of the urease nickel metallocenter. This chain is Urease accessory protein UreD 2, found in Methylorubrum extorquens (strain PA1) (Methylobacterium extorquens).